A 91-amino-acid polypeptide reads, in one-letter code: Probable Fe(2+)-trafficking protein (91 aa).

This sequence belongs to the Fe(2+)-trafficking protein family. Monomer.

Functionally, could be a mediator in iron transactions between iron acquisition and iron-requiring processes, such as synthesis and/or repair of Fe-S clusters in biosynthetic enzymes. The polypeptide is Probable Fe(2+)-trafficking protein (Salmonella agona (strain SL483)).